Here is an 822-residue protein sequence, read N- to C-terminus: Valine--tRNA ligase (822 aa).

The 'HIGH' region motif lies at 41-51; it reads PNVTGQLHLGH. The 'KMSKS' region signature appears at 511–515; that stretch reads KMSKS. K514 lines the ATP pocket. A coiled-coil region spans residues 765-822; it reads EQKGRELKEIQFLKSEILRAEKILTNKGFLEKAPREKIDLERTKLEKLKEKLAFYEKK.

It belongs to the class-I aminoacyl-tRNA synthetase family. ValS type 1 subfamily. In terms of assembly, monomer.

The protein localises to the cytoplasm. The enzyme catalyses tRNA(Val) + L-valine + ATP = L-valyl-tRNA(Val) + AMP + diphosphate. Functionally, catalyzes the attachment of valine to tRNA(Val). As ValRS can inadvertently accommodate and process structurally similar amino acids such as threonine, to avoid such errors, it has a 'posttransfer' editing activity that hydrolyzes mischarged Thr-tRNA(Val) in a tRNA-dependent manner. This is Valine--tRNA ligase from Mesomycoplasma hyopneumoniae (strain 232) (Mycoplasma hyopneumoniae).